Reading from the N-terminus, the 1171-residue chain is MSLRFVIGRAGSGKSTLCLREVQEELKQRPRGKTILYLVPEQMTFQTQQALIGSEDVRGSIRAQVFSFSRLAWKVLQEVGGASRLHIDEAGVHMLLRKIVESRKDGLSVFQKAAEQNGFFEHLGSMIAEFKRYNVTPSNVYEMWQQLDAHSSSAEQKLLANKVYDLQLLYDDFERALIGKYLDSEDYLQLLVEKLPQSEYVNGAEIYIDGFHSFSPQELEIVRQLMICGARVTITLTIDEKTLAQPVNELDLFYETTLTYEKIKQVAREEKIEIEKTIPLMEQPRFHSPALAHLEAHYEARPNEKFNGQASVTISTAANLRAEVEGVAREIRKLVANEKYRYRDIAVLLRNGESYYDVMRTLFTDYNIPHFIDEKRPMSHHPLVECIRSALEIISGNWRYDAVFRCVKTELLYPLDVRKETMREEMDKFENYCLAYGVQGKRWTSEDPWMYRRYRSLDDTNGMITDSEREMEEKINRLRDVVRTPVIRMQKRLKRAGTVMQMCEVVYLFLEELDVPKKLEELRIRAEESGDFLFATDHEQVWEEVMSLLDTFVEMLGEEKMSLSMFTDVMSTGLEALQFANIPPSLDQVLIANIDHSRLSDVKATFIIGVNEGVIPAAPMDEGMLSDEEREVLGAAGIELAPTTRQTLLEEQFVMYQMVTRASERLYISCPLADEEGKTLLASSFIKKIKRMFPNVKDSFITNDVNDLSRSEQISYVATPEVTLSYVMQQLQTWKRYGFEGNLDFWWDVYNFYVTSDEWKQKSSRVLSSLFYRNRAKKLSTAVSRDLYGDIIKGSVSRMELFNRCAYAHFAQHGLSLRERDIFKLDAPDIGELFHAALKKIADKLLRENRTWSDLSIKECEHLSVLVIEEIAPLLQRQILLSSNRHFYLKQKLQQIIFRTSIILREHAKSSGFVPVDLEVPFGMGGTGSLPPMEFSLPNGVKMEVVGRIDRVDKAEDENGTFLRIIDYKSSSKALDLTEVYYGLALQMLTYLDVVTSNAQMWMKKGQAASPAGVLYFHIHNPIVEMKGDASEAEIEKEILKKFKMKGLVLGDADVVRLMDNKLSTGSSDIISAGLKKDGSFSARSSIASEQEFNVLQKYVHHTFENIGKDITEGVIDIAPYKMGNKAACTFCNFKSVCQFDESLEDNQFRTLKDMKDSEAMEKIREEVGGE.

Positions 1–287 constitute a UvrD-like helicase ATP-binding domain; sequence MSLRFVIGRA…IPLMEQPRFH (287 aa). 8-15 contacts ATP; that stretch reads GRAGSGKS. The region spanning 281–587 is the UvrD-like helicase C-terminal domain; the sequence is MEQPRFHSPA…QFANIPPSLD (307 aa). [4Fe-4S] cluster contacts are provided by cysteine 805, cysteine 1129, cysteine 1132, and cysteine 1138.

This sequence belongs to the helicase family. AddB/RexB type 1 subfamily. As to quaternary structure, heterodimer of AddA and AddB. Mg(2+) is required as a cofactor. Requires [4Fe-4S] cluster as cofactor.

Its function is as follows. The heterodimer acts as both an ATP-dependent DNA helicase and an ATP-dependent, dual-direction single-stranded exonuclease. Recognizes the chi site generating a DNA molecule suitable for the initiation of homologous recombination. The AddB subunit has 5' -&gt; 3' nuclease activity but not helicase activity. In Bacillus cereus (strain G9842), this protein is ATP-dependent helicase/deoxyribonuclease subunit B.